The sequence spans 120 residues: Flagellar protein FliT (120 aa).

The required for homodimerization stretch occupies residues 1–50 (MNDSSLSLKKWHALSALSNTMLSLAQSGKWDELIEQEVAYVSLVEKISIT). The segment at 59-97 (IQDQAMVMLNNVLQNEMTLKTLLQERMDELHGLMAQTGK) is fliD binding.

It belongs to the FliT family. In terms of assembly, homodimer. Interacts with FliD and FlhC.

The protein localises to the cytoplasm. The protein resides in the cytosol. Dual-function protein that regulates the transcription of class 2 flagellar operons and that also acts as an export chaperone for the filament-capping protein FliD. As a transcriptional regulator, acts as an anti-FlhDC factor; it directly binds FlhC, thus inhibiting the binding of the FlhC/FlhD complex to class 2 promoters, resulting in decreased expression of class 2 flagellar operons. As a chaperone, effects FliD transition to the membrane by preventing its premature polymerization, and by directing it to the export apparatus. The chain is Flagellar protein FliT from Enterobacter sp. (strain 638).